The sequence spans 122 residues: EPIDERMAL PATTERNING FACTOR-like protein 1 (122 aa).

A signal peptide spans 1 to 26; the sequence is MFAIYKSTLLLLPLILILLITPQVSS. 3 disulfide bridges follow: Cys55/Cys113, Cys59/Cys65, and Cys62/Cys115.

This sequence belongs to the plant cysteine rich small secretory peptide family. Epidermal patterning factor subfamily.

It localises to the secreted. Controls stomatal patterning. This Arabidopsis thaliana (Mouse-ear cress) protein is EPIDERMAL PATTERNING FACTOR-like protein 1.